A 236-amino-acid polypeptide reads, in one-letter code: 2-phospho-L-lactate guanylyltransferase (236 aa).

It belongs to the CofC family. Homodimer.

The catalysed reaction is (2S)-2-phospholactate + GTP + H(+) = (2S)-lactyl-2-diphospho-5'-guanosine + diphosphate. The protein operates within cofactor biosynthesis; coenzyme F420 biosynthesis. In terms of biological role, guanylyltransferase that catalyzes the activation of (2S)-2-phospholactate (2-PL) as (2S)-lactyl-2-diphospho-5'-guanosine, via the condensation of 2-PL with GTP. It is involved in the biosynthesis of coenzyme F420, a hydride carrier cofactor. The polypeptide is 2-phospho-L-lactate guanylyltransferase (Natrialba magadii (strain ATCC 43099 / DSM 3394 / CCM 3739 / CIP 104546 / IAM 13178 / JCM 8861 / NBRC 102185 / NCIMB 2190 / MS3) (Natronobacterium magadii)).